A 508-amino-acid polypeptide reads, in one-letter code: Monocarboxylate transporter 9 (508 aa).

Transmembrane regions (helical) follow at residues 13-33 (WVIV…PLAV), 53-73 (WVGS…SLFV), 80-100 (PVTI…SLAP), 102-122 (IYFL…LLYT), 137-157 (GLAL…YAAL), and 164-184 (FYGL…ILAC). The tract at residues 242 to 263 (GDWGRETSLPKNPTGAAHTKEP) is disordered. Helical transmembrane passes span 303-323 (VFSA…PPSL), 341-361 (IPLI…LGIL), 370-390 (LYLY…IPLA), 396-416 (LAIL…FPYV), 431-451 (GILM…VGWF), and 460-480 (IAFY…LLAI).

The protein belongs to the major facilitator superfamily. Monocarboxylate porter (TC 2.A.1.13) family. In terms of tissue distribution, expressed in the liver and kidneys. In the liver localizes on the sinusoidal membrane of the hepatocytes.

The protein localises to the cell membrane. The enzyme catalyses creatine(in) = creatine(out). It catalyses the reaction (R)-carnitine(in) = (R)-carnitine(out). In terms of biological role, extracellular pH-and Na(+)-sensitive low-affinity creatine transporter. Also functions as a pH-independent carnitine efflux transporter. The sequence is that of Monocarboxylate transporter 9 (Slc16a9) from Rattus norvegicus (Rat).